Here is a 476-residue protein sequence, read N- to C-terminus: Cytoplasmic 60S subunit biogenesis factor ZNF622 (476 aa).

Residue Ala2 is modified to N-acetylalanine. 2 consecutive U1-type zinc fingers follow at residues 4-28 and 69-93; these read LTCI…TDWH and TYCT…SRRH. A disordered region spans residues 137–243; the sequence is AIKAQPSTSP…AEDAAAEESP (107 aa). The segment covering 167–177 has biased composition (basic and acidic residues); the sequence is VPERDPTEKPP. Positions 195–239 are enriched in acidic residues; that stretch reads EDGEEEGEEEEEDDEDEDWEDIDSDDGLECEDPGVEDQDAEDAAA. Position 275 is a phosphoserine (Ser275).

Belongs to the REI1 family. Homo- and heterodimer. Associates with pre-60S ribosomal particles. Interacts with MELK and MYBL2. Interacts with DNAJC21. Post-translationally, phosphorylated by MELK. The phosphorylation may redirect the protein to the nucleus. In terms of processing, ubiquitinated by HECTD1, leading to its degradation.

Its subcellular location is the cytoplasm. It localises to the nucleus. In terms of biological role, pre-60S-associated cytoplasmic factor involved in the cytoplasmic maturation of the 60S subunit. The sequence is that of Cytoplasmic 60S subunit biogenesis factor ZNF622 (Znf622) from Mus musculus (Mouse).